A 120-amino-acid chain; its full sequence is Large ribosomal subunit protein bL17 (120 aa).

The protein belongs to the bacterial ribosomal protein bL17 family. Part of the 50S ribosomal subunit. Contacts protein L32.

The sequence is that of Large ribosomal subunit protein bL17 from Geobacillus sp. (strain WCH70).